Consider the following 136-residue polypeptide: Large ribosomal subunit protein eL27 (136 aa).

The 36-residue stretch at 5–40 (MKPGKVVLVLAGRYSGRKAVIVKNIDDGTSDRPYSH) folds into the KOW domain. 2 positions are modified to N6-acetyllysine: lysine 27 and lysine 93.

It belongs to the eukaryotic ribosomal protein eL27 family. As to quaternary structure, component of the large ribosomal subunit. Interacts with RRP1B. Component of the large ribosomal subunit. Interacts with RRP1B. Interacts with DHX33.

It localises to the cytoplasm. The protein localises to the cytosol. It is found in the rough endoplasmic reticulum. Component of the large ribosomal subunit. Required for proper rRNA processing and maturation of 28S and 5.8S rRNAs. The chain is Large ribosomal subunit protein eL27 (RPL27) from Canis lupus familiaris (Dog).